Reading from the N-terminus, the 601-residue chain is Alpha-terpineol synthase, chloroplastic (601 aa).

The transit peptide at 1–47 (MSTISIHHVGILRNPLHSKSKRASINKPWSLSLPRSSSASRLVEPCR) directs the protein to the chloroplast. Residues Asp357 and Asp361 each contribute to the Mn(2+) site. The short motif at 357-361 (DDVYD) is the DDXXD motif element. Homodimerization stretches follow at residues 363 to 369 (YGTLDEL) and 435 to 471 (EAEW…ELSL). The Mn(2+) site is built by Asp499 and Glu507.

Belongs to the terpene synthase family. In terms of assembly, homodimer. The cofactor is Mn(2+). It depends on Mg(2+) as a cofactor.

The protein localises to the plastid. Its subcellular location is the chloroplast. It carries out the reaction (2E)-geranyl diphosphate + H2O = (S)-alpha-terpineol + diphosphate. The catalysed reaction is (2E)-geranyl diphosphate + H2O = (R)-alpha-terpineol + diphosphate. It functions in the pathway secondary metabolite biosynthesis; terpenoid biosynthesis. Functionally, involved in the biosynthesis of phenolic monoterpenes natural products. Monoterpene synthase which catalyzes the conversion of geranyl diphosphate (GPP) to alpha-terpineol (isomer is not determined). In Thymus caespititius (Cretan thyme), this protein is Alpha-terpineol synthase, chloroplastic.